Reading from the N-terminus, the 208-residue chain is Large ribosomal subunit protein uL4 (208 aa).

The span at 47–58 (ARAARERSDVAR) shows a compositional bias: basic and acidic residues. A disordered region spans residues 47–84 (ARAARERSDVARTGKKFGRQKGGGTARHGDRRAPIFIG).

Belongs to the universal ribosomal protein uL4 family. Part of the 50S ribosomal subunit.

One of the primary rRNA binding proteins, this protein initially binds near the 5'-end of the 23S rRNA. It is important during the early stages of 50S assembly. It makes multiple contacts with different domains of the 23S rRNA in the assembled 50S subunit and ribosome. In terms of biological role, forms part of the polypeptide exit tunnel. The chain is Large ribosomal subunit protein uL4 from Sphingopyxis alaskensis (strain DSM 13593 / LMG 18877 / RB2256) (Sphingomonas alaskensis).